We begin with the raw amino-acid sequence, 400 residues long: Deoxyguanosinetriphosphate triphosphohydrolase-like protein (400 aa).

One can recognise an HD domain in the interval 73–215 (RLTHSIEVSQ…AAIADDIAYN (143 aa)).

This sequence belongs to the dGTPase family. Type 2 subfamily.

The chain is Deoxyguanosinetriphosphate triphosphohydrolase-like protein from Bartonella henselae (strain ATCC 49882 / DSM 28221 / CCUG 30454 / Houston 1) (Rochalimaea henselae).